A 481-amino-acid polypeptide reads, in one-letter code: Beta-amyrin 16-beta-monooxygenase (481 aa).

The chain crosses the membrane as a helical span at residues 4-24 (LFIIISLVIVILTTIFILSNL). Cys-428 contacts heme.

This sequence belongs to the cytochrome P450 family. Heme serves as cofactor. As to expression, highly expressed in roots. Expressed at very low levels in leaves and petals.

The protein resides in the membrane. The enzyme catalyses beta-amyrin + reduced [NADPH--hemoprotein reductase] + O2 = maniladiol + oxidized [NADPH--hemoprotein reductase] + H2O + H(+). It catalyses the reaction oleanolate + reduced [NADPH--hemoprotein reductase] + O2 = cochalate + oxidized [NADPH--hemoprotein reductase] + H2O + H(+). In terms of biological role, involved in triterpenoid saponin biosynthesis in roots. Catalyzes the hydroxylation of beta-amyrin at the C-16 beta position to form maniladiol. Is also able to oxidize oleanolat to cochalate. Has weak activity catalyzing the three-step oxidation at C-28 of beta-amyrin to form oleanolate. This chain is Beta-amyrin 16-beta-monooxygenase, found in Platycodon grandiflorus (Balloon flower).